The chain runs to 118 residues: T cell receptor gamma variable 2 (118 aa).

The signal sequence occupies residues 1-17 (MQWALAVLLAFLSPASQ). Residues 18-118 (KSSNLEGRTK…GVYYCATWDG (101 aa)) enclose the Ig-like domain. A disulfide bridge links cysteine 41 with cysteine 113.

Gamma-delta TR is a heterodimer composed of a gamma and delta chain; disulfide-linked. The gamma-delta TR is associated with the transmembrane signaling CD3 coreceptor proteins following the stoichiometry: a single gamma-delta TR heterodimer associates with one CD3D-CD3E heterodimer, one CD3G-CD3E heterodimer and one CD247 homodimer forming a stable octameric structure. Upon activation, gamma-delta TR complex associates with FCER1G to initiate intracellular signaling.

The protein localises to the cell membrane. Its function is as follows. V region of the variable domain of T cell receptor (TR) gamma chain that participates in the antigen recognition. Gamma-delta TRs recognize a variety of self and foreign non-peptide antigens frequently expressed at the epithelial boundaries between the host and external environment, including endogenous lipids presented by MH-like protein CD1D and phosphoantigens presented by butyrophilin-like molecule BTN3A1. Upon antigen recognition induces rapid, innate-like immune responses involved in pathogen clearance and tissue repair. Binding of gamma-delta TR complex to antigen triggers phosphorylation of immunoreceptor tyrosine-based activation motifs (ITAMs) in the CD3 chains by the LCK and FYN kinases, allowing the recruitment, phosphorylation, and activation of ZAP70 that facilitates phosphorylation of the scaffolding proteins LCP2 and LAT. This lead to the formation of a supramolecular signalosome that recruits the phospholipase PLCG1, resulting in calcium mobilization and ERK activation, ultimately leading to T cell expansion and differentiation into effector cells. Gamma-delta TRs are produced through somatic rearrangement of a limited repertoire of variable (V), diversity (D), and joining (J) genes. The potential diversity of gamma-delta TRs is conferred by the unique ability to rearrange (D) genes in tandem and to utilize all three reading frames. The combinatorial diversity is considerably increased by the sequence exonuclease trimming and random nucleotide (N) region additions which occur during the V-(D)-J rearrangements. The sequence is that of T cell receptor gamma variable 2 from Homo sapiens (Human).